Consider the following 484-residue polypeptide: Monocarboxylate transporter 2 (484 aa).

Topologically, residues 1 to 16 (MPSETAVPPPHPIPPD) are cytoplasmic. A helical membrane pass occupies residues 17 to 37 (GGWGWVVVGAAFISIGFSYAF). The Extracellular segment spans residues 38 to 60 (PKAVTVFFKDIQQIFQASYSEIA). Residues 61–81 (WISSIMLAVMYAGGPISSVLV) traverse the membrane as a helical segment. The Cytoplasmic segment spans residues 82–87 (NNYGSR). Residues 88 to 108 (PVVIIGGLLCCTGMILASFSN) form a helical membrane-spanning segment. Residues 109 to 116 (SVLELYLT) lie on the Extracellular side of the membrane. A helical transmembrane segment spans residues 117–137 (IGFIGGLGLAFNLQPALTIIG). The Cytoplasmic portion of the chain corresponds to 138–144 (KYFYRRR). The helical transmembrane segment at 145–165 (PMANGLAMAGSPVFLSSLAPF) threads the bilayer. The Extracellular portion of the chain corresponds to 166–174 (NQYLFNSYG). A helical transmembrane segment spans residues 175 to 195 (WKGSFLILGGIFLHSCVAGCL). Topologically, residues 196 to 245 (MRPVQTSPRKSKSKSKVGSRQDGSMKKASKVSTAEKINRFLDFSLFKHRG) are cytoplasmic. Residues 201 to 224 (TSPRKSKSKSKVGSRQDGSMKKAS) form a disordered region. Residues 246–266 (FLIYLSGNVIMFLGFFAPIIF) traverse the membrane as a helical segment. Residues 267–282 (LAPYAKDKGVDEYNAA) lie on the Extracellular side of the membrane. Residues 283–303 (LLLSVMAFVDMFARPTGGLIA) form a helical membrane-spanning segment. Residues 304-311 (NSKLIRPR) lie on the Cytoplasmic side of the membrane. A helical transmembrane segment spans residues 312–332 (IQYFFSFAIVFTGICHLLCPL). Residues 333 to 337 (ADTYP) lie on the Extracellular side of the membrane. A helical membrane pass occupies residues 338 to 358 (ALVVYSIFFGYGFGSVSSVLF). At 359–372 (ETLMDLVGPARFSS) the chain is on the cytoplasmic side. A helical transmembrane segment spans residues 373–393 (AVGLATIVECCPVLLGPPLAG). Topologically, residues 394 to 405 (KLVDKTKDYKYM) are extracellular. Residues 406-426 (YIASGTIVVISGIYLFIGNAI) form a helical membrane-spanning segment. The Cytoplasmic segment spans residues 427 to 484 (NYRLLAKERKREKARKKKSATHPSRESEALSRSKQDDVSVKVSNPHNSPSDRERESNI). Positions 437 to 484 (REKARKKKSATHPSRESEALSRSKQDDVSVKVSNPHNSPSDRERESNI) are disordered. Basic and acidic residues-rich tracts occupy residues 449 to 465 (PSRE…DDVS) and 475 to 484 (PSDRERESNI).

Belongs to the major facilitator superfamily. Monocarboxylate porter (TC 2.A.1.13) family. Homodimer. Interacts with GRID2IP. Interacts with EMB; interaction mediates SLC16A7 targeting to the plasma membrane. Interacts with isoform 2 of BSG. As to expression, abundant on the surface of hepatocytes. Present on parietal cells of the oxyntic gland of the stomach, on the basolateral surface of epithelial cells in the collecting ducts of the kidney, on sperm tails throughout the epididymis. Expressed in mitochondria-rich skeletal muscle fibers and cardiac myocytes (at protein level).

It localises to the cell membrane. The protein resides in the basolateral cell membrane. The protein localises to the cytoplasm. It catalyses the reaction pyruvate(out) + H(+)(out) = pyruvate(in) + H(+)(in). It carries out the reaction 3-methyl-2-oxobutanoate(out) + H(+)(out) = 3-methyl-2-oxobutanoate(in) + H(+)(in). The enzyme catalyses (S)-lactate(in) + H(+)(in) = (S)-lactate(out) + H(+)(out). The catalysed reaction is acetoacetate(out) + H(+)(out) = acetoacetate(in) + H(+)(in). It catalyses the reaction (R)-3-hydroxybutanoate(out) + H(+)(out) = (R)-3-hydroxybutanoate(in) + H(+)(in). It carries out the reaction 4-methyl-2-oxopentanoate(out) + H(+)(out) = 4-methyl-2-oxopentanoate(in) + H(+)(in). The enzyme catalyses (S)-3-hydroxybutanoate(out) + H(+)(out) = (S)-3-hydroxybutanoate(in) + H(+)(in). Its activity is regulated as follows. Transport activity exhibits steep dependence on substrate concentration. Substrate concentration sensitivity of SLC16A7 arises from the strong inter-subunit cooperativity of the SLC16A7 dimer during transport. Inhibited by AR-C155858. Functionally, proton-coupled monocarboxylate symporter. Catalyzes the rapid transport across the plasma membrane of monocarboxylates such as L-lactate, pyruvate and ketone bodies, acetoacetate, beta-hydroxybutyrate and acetate. Dimerization is functionally required and both subunits work cooperatively in transporting substrate. The sequence is that of Monocarboxylate transporter 2 (SLC16A7) from Mesocricetus auratus (Golden hamster).